Consider the following 226-residue polypeptide: MNPIVINRLQRKLGYTFDQYDLLIQALTHRSASSKHNERLEFLGDSILSFVIANALYHRFPRVDEGDMSRMRATLVRGNTLAELAREFELGECLRLGPGELKSGGYRRESILADTVEALIGAIFLDSDIQSIERIILSWYETRLNEISPGDKQKDPKTRLQEYLQGHHLPLPSYLVVMVRGEAHDQEFTIHCQVSGIEQPVKGTGSSRRKAEQAAAEQALKQLELE.

In terms of domain architecture, RNase III spans 6-128 (INRLQRKLGY…LIGAIFLDSD (123 aa)). Glu-41 is a binding site for Mg(2+). Asp-45 is an active-site residue. Mg(2+) is bound by residues Asp-114 and Glu-117. Glu-117 is an active-site residue. Positions 155 to 225 (DPKTRLQEYL…AEQALKQLEL (71 aa)) constitute a DRBM domain.

It belongs to the ribonuclease III family. As to quaternary structure, homodimer. Requires Mg(2+) as cofactor.

It is found in the cytoplasm. The enzyme catalyses Endonucleolytic cleavage to 5'-phosphomonoester.. Functionally, digests double-stranded RNA. Involved in the processing of primary rRNA transcript to yield the immediate precursors to the large and small rRNAs (23S and 16S). Processes some mRNAs, and tRNAs when they are encoded in the rRNA operon. Processes pre-crRNA and tracrRNA of type II CRISPR loci if present in the organism. This Photorhabdus laumondii subsp. laumondii (strain DSM 15139 / CIP 105565 / TT01) (Photorhabdus luminescens subsp. laumondii) protein is Ribonuclease 3.